Consider the following 215-residue polypeptide: MAEDTETRPASAGAEEREEGEIADDGDGSSAAAAGRITAHPLENAWTFWFDNPQGKSRQVAWGSTIHPIHTFSTVEDFWGLYNNIHNPSKLNVGADFHCFKNKIEPKWEDPICANGGKWTISCGRGKSDTFWLHTLLAMIGEQFDFGDEICGAVVSVRQKQERVAIWTKNAANEAAQISIGKQWKEFLDYKDSIGFIVHEDAKRSDKGPKNRYTV.

Residues 1 to 32 (MAEDTETRPASAGAEEREEGEIADDGDGSSAA) form a disordered region. The segment covering 16-27 (EREEGEIADDGD) has biased composition (acidic residues). EIF4G-binding regions lie at residues 40-43 (HPLE) and 50-86 (FDNP…NNIH). Residues 58 to 63 (RQVAWG), Lys90, and 108 to 109 (WE) contribute to the mRNA site. Cysteines 113 and 151 form a disulfide. Residues 134–143 (HTLLAMIGEQ) form an EIF4G-binding region. Residues 158 to 163 (RQKQER) and 203 to 207 (KRSDK) contribute to the mRNA site.

The protein belongs to the eukaryotic initiation factor 4E family. In terms of assembly, EIF4F is a multi-subunit complex, the composition of which varies with external and internal environmental conditions. It is composed of at least EIF4A, EIF4E and EIF4G. EIF4E is also known to interact with other partners. In higher plants two isoforms of EIF4F have been identified, named isoform EIF4F and isoform EIF(iso)4F. Isoform EIF4F has subunits p220 and p26, whereas isoform EIF(iso)4F has subunits p82 and p28. Post-translationally, according to the redox status, the Cys-113-Cys-151 disulfide bridge may have a role in regulating protein function by affecting its ability to bind capped mRNA.

Its subcellular location is the nucleus. It localises to the cytoplasm. In terms of biological role, component of the protein complex eIF4F, which is involved in the recognition of the mRNA cap, ATP-dependent unwinding of 5'-terminal secondary structure and recruitment of mRNA to the ribosome. Recognizes and binds the 7-methylguanosine-containing mRNA cap during an early step in the initiation of protein synthesis and facilitates ribosome binding by inducing the unwinding of the mRNAs secondary structures. The chain is Eukaryotic translation initiation factor 4E-1 from Triticum aestivum (Wheat).